A 176-amino-acid polypeptide reads, in one-letter code: ATP-dependent protease subunit HslV (176 aa).

The active site involves threonine 2. Na(+) contacts are provided by glycine 157, cysteine 160, and threonine 163.

The protein belongs to the peptidase T1B family. HslV subfamily. In terms of assembly, a double ring-shaped homohexamer of HslV is capped on each side by a ring-shaped HslU homohexamer. The assembly of the HslU/HslV complex is dependent on binding of ATP.

Its subcellular location is the cytoplasm. It carries out the reaction ATP-dependent cleavage of peptide bonds with broad specificity.. Its activity is regulated as follows. Allosterically activated by HslU binding. Functionally, protease subunit of a proteasome-like degradation complex believed to be a general protein degrading machinery. This Proteus mirabilis (strain HI4320) protein is ATP-dependent protease subunit HslV.